Here is a 218-residue protein sequence, read N- to C-terminus: Pyridoxine/pyridoxamine 5'-phosphate oxidase (218 aa).

Residues 14–17 and Lys72 contribute to the substrate site; that span reads RREY. FMN is bound by residues 67 to 72, 82 to 83, Arg88, Lys89, and Gln111; these read RIVLLK and YT. Residues Tyr129, Arg133, and Ser137 each coordinate substrate. FMN-binding positions include 146 to 147 and Trp191; that span reads QS. 197-199 contributes to the substrate binding site; that stretch reads RLH. FMN is bound at residue Arg201.

It belongs to the pyridoxamine 5'-phosphate oxidase family. As to quaternary structure, homodimer. It depends on FMN as a cofactor.

The enzyme catalyses pyridoxamine 5'-phosphate + O2 + H2O = pyridoxal 5'-phosphate + H2O2 + NH4(+). The catalysed reaction is pyridoxine 5'-phosphate + O2 = pyridoxal 5'-phosphate + H2O2. It functions in the pathway cofactor metabolism; pyridoxal 5'-phosphate salvage; pyridoxal 5'-phosphate from pyridoxamine 5'-phosphate: step 1/1. It participates in cofactor metabolism; pyridoxal 5'-phosphate salvage; pyridoxal 5'-phosphate from pyridoxine 5'-phosphate: step 1/1. Its function is as follows. Catalyzes the oxidation of either pyridoxine 5'-phosphate (PNP) or pyridoxamine 5'-phosphate (PMP) into pyridoxal 5'-phosphate (PLP). The sequence is that of Pyridoxine/pyridoxamine 5'-phosphate oxidase from Salmonella typhi.